Here is a 205-residue protein sequence, read N- to C-terminus: CASP-like protein 3A1 (205 aa).

Residues 1 to 39 lie on the Cytoplasmic side of the membrane; sequence MGIGMDSSTMSGPLVAHSGILDGDYEKRPAVCKMQMRFD. A helical transmembrane segment spans residues 40 to 60; that stretch reads LANVGLRVLSLACSLVALVSM. The Extracellular segment spans residues 61 to 89; the sequence is ASNQESGVVTVFGFKLPVYSKWSYSDSFE. Residues 90–110 form a helical membrane-spanning segment; the sequence is FLVGASAAAAAHSLLQLLLCG. Residues 111–125 are Cytoplasmic-facing; sequence MKMVKRASTIPSRNH. A helical transmembrane segment spans residues 126–146; the sequence is AWLLFAGDQVFAYGMLAAASA. The Extracellular segment spans residues 147 to 176; sequence AAGVTNLNRTGFRHSDLPNFCKPLHRFCDK. Asn-154 carries N-linked (GlcNAc...) asparagine glycosylation. The helical transmembrane segment at 177–197 threads the bilayer; it reads AAISIVFAFISSLILGGSAVL. At 198–205 the chain is on the cytoplasmic side; that stretch reads DVFWLSKN.

It belongs to the Casparian strip membrane proteins (CASP) family. As to quaternary structure, homodimer and heterodimers.

The protein localises to the cell membrane. In Picea sitchensis (Sitka spruce), this protein is CASP-like protein 3A1.